Consider the following 104-residue polypeptide: Large ribosomal subunit protein uL24 (104 aa).

The protein belongs to the universal ribosomal protein uL24 family. In terms of assembly, part of the 50S ribosomal subunit.

Functionally, one of two assembly initiator proteins, it binds directly to the 5'-end of the 23S rRNA, where it nucleates assembly of the 50S subunit. In terms of biological role, one of the proteins that surrounds the polypeptide exit tunnel on the outside of the subunit. The chain is Large ribosomal subunit protein uL24 from Shewanella oneidensis (strain ATCC 700550 / JCM 31522 / CIP 106686 / LMG 19005 / NCIMB 14063 / MR-1).